Reading from the N-terminus, the 396-residue chain is RNA binding protein fox-1 homolog 1 (396 aa).

The tract at residues 1–119 is disordered; the sequence is MNCEREQLRG…ESKSQPKRLH (119 aa). Polar residues predominate over residues 67 to 86; it reads PPTQTHSEQSADTSAQTVSG. Over residues 87–98 the composition is skewed to low complexity; the sequence is TATQTDDAAPTD. The span at 99–112 shows a compositional bias: polar residues; the sequence is GQPQTQPSENTESK. An RRM domain is found at 116-192; it reads KRLHVSNIPF…RKIEVNNATA (77 aa). Asymmetric dimethylarginine is present on residues arginine 316 and alanine 337. Arginine 387 is subject to Omega-N-methylarginine.

Binds to the C-terminus of ATXN2. In terms of tissue distribution, detected in brain (at protein level). Detected in heart, brain, neurons, skeletal muscle and embryo.

The protein localises to the nucleus. It localises to the cytoplasm. In terms of biological role, RNA-binding protein that regulates alternative splicing events by binding to 5'-UGCAUGU-3' elements. Prevents binding of U2AF2 to the 3'-splice site. Regulates alternative splicing of tissue-specific exons and of differentially spliced exons during erythropoiesis. The chain is RNA binding protein fox-1 homolog 1 (Rbfox1) from Mus musculus (Mouse).